The chain runs to 147 residues: Hemoglobin subunit beta (147 aa).

Valine 2 carries the post-translational modification N-acetylvaline. The Globin domain maps to 3–147; that stretch reads HLSAEEKEAV…VANALAHKYH (145 aa). Serine 45 carries the phosphoserine modification. Lysine 60 is subject to N6-acetyllysine. Histidine 64 is a binding site for heme b. Lysine 83 bears the N6-acetyllysine mark. Histidine 93 lines the heme b pocket. Residue cysteine 94 is modified to S-nitrosocysteine. Lysine 145 carries the N6-acetyllysine modification.

The protein belongs to the globin family. Heterotetramer of two alpha chains and two beta chains. In terms of tissue distribution, red blood cells.

Functionally, involved in oxygen transport from the lung to the various peripheral tissues. The protein is Hemoglobin subunit beta (HBB) of Sus scrofa (Pig).